A 184-amino-acid polypeptide reads, in one-letter code: Protein FAM89A (184 aa).

Residues 148–184 form a disordered region; it reads YFQEQNSLHDRRDRGPPRDLSLPVSSLSSSDWILESI. Positions 154–164 are enriched in basic and acidic residues; sequence SLHDRRDRGPP. Over residues 167–184 the composition is skewed to low complexity; it reads LSLPVSSLSSSDWILESI.

It belongs to the FAM89 family.

This chain is Protein FAM89A (FAM89A), found in Homo sapiens (Human).